A 117-amino-acid chain; its full sequence is MTRIRRGYIARRRRTKIRLFASTFRGAHSRLTRTITQQKMRALVSTQRDRGRRKRDFRRLWITRINAVTRENRVSYSYSRLIHDLYKKRLLLNRKILAQIAISNRNCLDTISNEILK.

Belongs to the bacterial ribosomal protein bL20 family.

Its subcellular location is the plastid. It localises to the chloroplast. Functionally, binds directly to 23S ribosomal RNA and is necessary for the in vitro assembly process of the 50S ribosomal subunit. It is not involved in the protein synthesizing functions of that subunit. This Calycanthus floridus var. glaucus (Eastern sweetshrub) protein is Large ribosomal subunit protein bL20c.